The primary structure comprises 187 residues: Cytochrome b-245 chaperone 1 (187 aa).

A helical membrane pass occupies residues 20-42; sequence GIRSWSLLVGILSTGLAAAYYSG. Positions 167 to 187 are disordered; that stretch reads ESPSERSQSSDSEPDGPGGQS. Phosphoserine is present on residues S168 and S170.

This sequence belongs to the CYBC1 family. Interacts with CYBB; CYBC1 may act as a chaperone stabilizing Cytochrome b-245 heterodimer.

It is found in the endoplasmic reticulum membrane. In terms of biological role, functions as a chaperone necessary for a stable expression of the CYBA and CYBB subunits of the cytochrome b-245 heterodimer. Controls the phagocyte respiratory burst and is essential for innate immunity. The protein is Cytochrome b-245 chaperone 1 of Rattus norvegicus (Rat).